The primary structure comprises 145 residues: Large ribosomal subunit protein uL13 (145 aa).

It belongs to the universal ribosomal protein uL13 family. Part of the 50S ribosomal subunit.

This protein is one of the early assembly proteins of the 50S ribosomal subunit, although it is not seen to bind rRNA by itself. It is important during the early stages of 50S assembly. The chain is Large ribosomal subunit protein uL13 from Staphylococcus aureus (strain Mu3 / ATCC 700698).